The primary structure comprises 262 residues: MAVGKNKRTSKGKKGGKKKVTDVFTKKEWYDLKAPKMFLVRNFGKTLVTKTIGKKLATDGLKGRIYEVNLADLNNDEDQAHKKIKLCCDHIINKDCYTDFCGLSITRDKLCSLIRKGYTLIEGYTDVKTIDNYQLRMFCIAFTKKRPNQTKTTCYAQTSQIKKIRKKMVDIMNAEASKVMLKDLVKKFIPESIGKEVEKQCKKIYPLQNVLIRKVKILKRPKLDISKLMELHTDSKEDAGKNVKSLPESKEATNILSAELKH.

It belongs to the eukaryotic ribosomal protein eS1 family. As to quaternary structure, component of the small ribosomal subunit. Mature ribosomes consist of a small (40S) and a large (60S) subunit. The 40S subunit contains about 33 different proteins and 1 molecule of RNA (18S). The 60S subunit contains about 49 different proteins and 3 molecules of RNA (25S, 5.8S and 5S).

The protein localises to the cytoplasm. The sequence is that of Small ribosomal subunit protein eS1 from Plasmodium vivax (strain Salvador I).